The chain runs to 146 residues: 3-dehydroquinate dehydratase (146 aa).

Tyrosine 24 serves as the catalytic Proton acceptor. Residues asparagine 75, histidine 81, and aspartate 88 each contribute to the substrate site. The active-site Proton donor is the histidine 101. Substrate contacts are provided by residues 102 to 103 (LS) and arginine 112.

This sequence belongs to the type-II 3-dehydroquinase family. Homododecamer.

The enzyme catalyses 3-dehydroquinate = 3-dehydroshikimate + H2O. It participates in metabolic intermediate biosynthesis; chorismate biosynthesis; chorismate from D-erythrose 4-phosphate and phosphoenolpyruvate: step 3/7. Its function is as follows. Catalyzes a trans-dehydration via an enolate intermediate. This is 3-dehydroquinate dehydratase from Maricaulis maris (strain MCS10) (Caulobacter maris).